The chain runs to 274 residues: Probable glycerophosphodiester phosphodiesterase 1 (274 aa).

The 253-residue stretch at 12-264 (PFVVAHRGAS…HHPGRTKAWL (253 aa)) folds into the GP-PDE domain. The active-site Proton acceptor is His17. Glu44 and Asp46 together coordinate Ca(2+). Residue His59 is the Proton donor of the active site. Glu126 is a binding site for Ca(2+).

The protein belongs to the glycerophosphoryl diester phosphodiesterase family. It depends on Ca(2+) as a cofactor.

It catalyses the reaction a sn-glycero-3-phosphodiester + H2O = an alcohol + sn-glycerol 3-phosphate + H(+). Its function is as follows. Glycerophosphodiester phosphodiesterase hydrolyzes glycerophosphodiesters into glycerol-3-phosphate (G3P) and the corresponding alcohol. The chain is Probable glycerophosphodiester phosphodiesterase 1 (glpQ1) from Mycobacterium tuberculosis (strain CDC 1551 / Oshkosh).